The primary structure comprises 381 residues: Guanine nucleotide-binding protein subunit alpha-12 (381 aa).

The S-palmitoyl cysteine moiety is linked to residue C11. Positions 56 to 381 (RLVKILLLGA…QENLKDIMLQ (326 aa)) constitute a G-alpha domain. The tract at residues 59-72 (KILLLGAGESGKST) is G1 motif. Residues 67 to 72 (ESGKST) and 202 to 205 (LLAR) each bind GTP. S71 serves as a coordination point for Mg(2+). The segment at 200 to 208 (DILLARKAT) is G2 motif. T208 contributes to the Mg(2+) binding site. The residue at position 208 (T208) is a Phosphothreonine. Residues 223–232 (FKMVDVGGQR) are G3 motif. The interval 292–299 (ILFLNKMD) is G4 motif. Residues 296–299 (NKMD) and A353 each bind GTP. Residues 351–356 (TTAIDT) are G5 motif.

This sequence belongs to the G-alpha family. G(12) subfamily. As to quaternary structure, g proteins are composed of 3 units; alpha, beta and gamma. The alpha chain contains the guanine nucleotide binding site. Interacts with UBXD5. Interacts (in GTP-bound form) with PPP5C (via TPR repeats); activates PPP5C phosphatase activity and translocates PPP5C to the cell membrane. Interacts with RGS22. Interacts (via N-terminus) with NAPA; the interaction promotes CDH5 localization to plasma membrane. Interacts with CTNND1 (via N-terminus); the interaction regulates CDH1-mediated cell-cell adhesion. Interacts with PPP2R1A; the interaction promotes protein phosphatase 2A activation causing dephosphorylation of MAPT. Interacts (in GTP-bound form) with ARHGEF1. Interacts (in GTP-bound form) with ARHGEF11 (via RGS domain). Interacts (in GTP-bound form) with ARHGEF12 (via RGS domain).

It localises to the cell membrane. Its subcellular location is the lateral cell membrane. The protein resides in the cytoplasm. Guanine nucleotide-binding proteins (G proteins) are involved as modulators or transducers in various transmembrane signaling systems. Activates effector molecule RhoA by binding and activating RhoGEFs (ARHGEF12/LARG). GNA12-dependent Rho signaling subsequently regulates transcription factor AP-1 (activating protein-1). GNA12-dependent Rho signaling also regulates protein phosphatese 2A activation causing dephosphorylation of its target proteins. Promotes tumor cell invasion and metastasis by activating RhoA/ROCK signaling pathway and up-regulating pro-inflammatory cytokine production. Inhibits CDH1-mediated cell adhesion in process independent from Rho activation. Together with NAPA promotes CDH5 localization to plasma membrane. May play a role in the control of cell migration through the TOR signaling cascade. The polypeptide is Guanine nucleotide-binding protein subunit alpha-12 (GNA12) (Homo sapiens (Human)).